The primary structure comprises 181 residues: Protein GrpE (181 aa).

The span at 1–24 (MSEENIGENEVETPETEPSAEAEV) shows a compositional bias: acidic residues. A disordered region spans residues 1-26 (MSEENIGENEVETPETEPSAEAEVES).

The protein belongs to the GrpE family. In terms of assembly, homodimer.

Its subcellular location is the cytoplasm. Its function is as follows. Participates actively in the response to hyperosmotic and heat shock by preventing the aggregation of stress-denatured proteins, in association with DnaK and GrpE. It is the nucleotide exchange factor for DnaK and may function as a thermosensor. Unfolded proteins bind initially to DnaJ; upon interaction with the DnaJ-bound protein, DnaK hydrolyzes its bound ATP, resulting in the formation of a stable complex. GrpE releases ADP from DnaK; ATP binding to DnaK triggers the release of the substrate protein, thus completing the reaction cycle. Several rounds of ATP-dependent interactions between DnaJ, DnaK and GrpE are required for fully efficient folding. This Rhizorhabdus wittichii (strain DSM 6014 / CCUG 31198 / JCM 15750 / NBRC 105917 / EY 4224 / RW1) (Sphingomonas wittichii) protein is Protein GrpE.